We begin with the raw amino-acid sequence, 209 residues long: Uracil phosphoribosyltransferase (209 aa).

5-phospho-alpha-D-ribose 1-diphosphate contacts are provided by residues arginine 79, arginine 104, and 131–139 (DPMLATGGS). Residues isoleucine 194 and 199-201 (GDA) contribute to the uracil site. 5-phospho-alpha-D-ribose 1-diphosphate is bound at residue aspartate 200.

It belongs to the UPRTase family. Mg(2+) serves as cofactor.

It catalyses the reaction UMP + diphosphate = 5-phospho-alpha-D-ribose 1-diphosphate + uracil. The protein operates within pyrimidine metabolism; UMP biosynthesis via salvage pathway; UMP from uracil: step 1/1. Its activity is regulated as follows. Allosterically activated by GTP. Catalyzes the conversion of uracil and 5-phospho-alpha-D-ribose 1-diphosphate (PRPP) to UMP and diphosphate. The protein is Uracil phosphoribosyltransferase of Desulfitobacterium hafniense (strain DSM 10664 / DCB-2).